We begin with the raw amino-acid sequence, 362 residues long: Quinolone epoxide rearrangement protein penF (362 aa).

The active site involves H220. Residue E222 is the Broensted acid of the active site.

This sequence belongs to the quinolone epoxide rearrangement protein penF family.

It carries out the reaction [(1'E)-5'-(3',3'-dimethyloxiran-2'-yl)-3'-hydroxy-3'-methylpent-1'-en-1'-yl]-quinolinone B = yaequinolone D. It participates in secondary metabolite biosynthesis. It functions in the pathway alkaloid biosynthesis. Its pathway is mycotoxin biosynthesis. Quinolone epoxide rearrangement protein; part of the gene cluster that mediates the biosynthesis of penigequinolones, potent insecticidal alkaloids that contain a highly modified 10-carbon prenyl group. The first stage is catalyzed by the nonribosomal peptide synthetase penN that condenses anthranilic acid and O-methyl-L-tyrosine to produce 4'-methoxycyclopeptin. 4'-methoxycyclopeptin is then converted to 4'-methoxydehydrocyclopeptin by the ketoglutarate-dependent dioxygenase penM through dehydrogenation to form a double bond between C-alpha and C-beta of the O-methyltyrosine side chain. PenM also converts its first product methoxydehydrocyclopeptin to 4'-methoxycyclopenin. The following conversion of 4'methoxycyclopenin into 4'-methoxyviridicatin is catalyzed by the cyclopenase penL. 4'-methoxyviridicatin is the precursor of quinolone natural products, and is further converted to quinolinone B. The prenyltransferase penI then catalyzes the canonical Friedel-Crafts alkylation of quinolinone B with dimethylallyl cation to yield dimethylallyl quinolone, which is subjected to FAD-dependent dehydrogenation by the FAD-linked oxidoreductase penH to yield conjugated aryl diene. The delta(3') double bond then serves as the site of the second alkylation with DMAPP catalyzed by the prenyltransferase penG to yield a carbenium ion intermediate, which can be attacked by H(2)O to yield a styrenyl quinolone containing a C3'-hydroxyprenyl chain, or undergo cyclization to yield yaequinolones J1 and J2. The conversion of the styrenyl quinolone into the tetrahydrofuran-containing yaequinolone C is performed by the FAD-dependent monooxygenase penE and involves epoxidation of the terminal C7'-C8' olefin, followed by epoxide ring opening initiated by the C3' hydroxyl group. The predicted cysteine hydrolase penJ acts as an epoxide hydrolase that enhances the rate of the 5-exo-tet cyclization step, increasing the yield of yaequinolone C. PenF catalyzes the cationic rearrangement of the epoxide formed by penE (before ring opening to produce yaequinolone C) into yaequinolone D. Finally, the short-chain dehydrogenase/reductase (SDR)-like reductase penD, catalyzes both the dehydration of yaequinolone D and the reduction of the resulting oxonium to yield penigequinolone. This is Quinolone epoxide rearrangement protein penF from Penicillium thymicola.